The chain runs to 153 residues: Ubiquitin/ISG15-conjugating enzyme E2 L6 (153 aa).

One can recognise a UBC core domain in the interval 2-149; that stretch reads MASKRVAKEL…AEEFTLKFGV (148 aa). Residue cysteine 86 is the Glycyl thioester intermediate of the active site.

The protein belongs to the ubiquitin-conjugating enzyme family. As to quaternary structure, interacts with RNF19A, RNF19B and RNF144B. Interacts with FLT3 (tyrosine phosphorylated). Post-translationally, ISGylated.

The enzyme catalyses S-ubiquitinyl-[E1 ubiquitin-activating enzyme]-L-cysteine + [E2 ubiquitin-conjugating enzyme]-L-cysteine = [E1 ubiquitin-activating enzyme]-L-cysteine + S-ubiquitinyl-[E2 ubiquitin-conjugating enzyme]-L-cysteine.. Its pathway is protein modification; protein ubiquitination. In terms of biological role, catalyzes the covalent attachment of ubiquitin or ISG15 to other proteins. Functions in the E6/E6-AP-induced ubiquitination of p53/TP53. Promotes ubiquitination and subsequent proteasomal degradation of FLT3. In Mus musculus (Mouse), this protein is Ubiquitin/ISG15-conjugating enzyme E2 L6 (Ube2l6).